Consider the following 590-residue polypeptide: MRLFAQLSWYFRREWRRYLGAVALLVIIAMLQLVPPKVVGIVVDGVTEQHFTTGQILMWIATMVLIAVVVYLLRYVWRVLLFGASYQLAVELREDYYRQLSRQHPEFYLRHRTGDLMARATNDVDRVVFAAGEGVLTLVDSLVMGCAVLIMMSTQISWQLTLFSLLPMPVMAIMIKRNGDALHERFKLAQAAFSSLNDRTQESLTSIRMIKAFGLEDRQSALFAADAEDTGKKNMRVARIDARFDPTIYIAIGMANLLAIGGGSWMVVQGSLTLGQLTSFMMYLGLMIWPMLALAWMFNIVERGSAAYSRIRAMLAEAPVVNDGSEPVPEGRGELDVNIHQFTYPQTDHPALENVNFALKPGQMLGICGPTGSGKSTLLSLIQRHFDVSEGDIRFHDIPLTKLQLDSWRSRLAVVSQTPFLFSDTVANNIALGCPNATQQEIEHVARLASVHDDILRLPQGYDTEVGERGVMLSGGQKQRISIARALLVNAEILILDDALSAVDGRTEHQILHNLRQWGQGRTVIISAHRLSALTEASEIIVMQHGHIAQRGNHDVLAQQSGWYRDMYRYQQLEAALDDAPENREEAVDA.

Residues 18–303 enclose the ABC transmembrane type-1 domain; sequence YLGAVALLVI…LAWMFNIVER (286 aa). Transmembrane regions (helical) follow at residues 23–43, 53–73, 134–154, 155–175, 248–268, and 280–300; these read ALLV…GIVV, TGQI…VYLL, GVLT…MMST, QISW…AIMI, IYIA…WMVV, and FMMY…MFNI. The ABC transporter domain maps to 337–570; it reads VNIHQFTYPQ…SGWYRDMYRY (234 aa). 369 to 376 is an ATP binding site; sequence GPTGSGKS.

Belongs to the ABC transporter superfamily. Drug exporter-2 (TC 3.A.1.117) family.

Its subcellular location is the cell inner membrane. It carries out the reaction ATP + H2O + xenobioticSide 1 = ADP + phosphate + xenobioticSide 2.. This is Multidrug resistance-like ATP-binding protein MdlA (mdlA) from Escherichia coli (strain K12).